Reading from the N-terminus, the 385-residue chain is Probable tRNA sulfurtransferase (385 aa).

The 104-residue stretch at 57 to 160 (DGVIERVKKV…RGNAYVFTDK (104 aa)) folds into the THUMP domain. Residues 180–181 (ML), 205–206 (YY), Arg262, Gly284, and Gln293 each bind ATP.

It belongs to the ThiI family.

It is found in the cytoplasm. The enzyme catalyses [ThiI sulfur-carrier protein]-S-sulfanyl-L-cysteine + a uridine in tRNA + 2 reduced [2Fe-2S]-[ferredoxin] + ATP + H(+) = [ThiI sulfur-carrier protein]-L-cysteine + a 4-thiouridine in tRNA + 2 oxidized [2Fe-2S]-[ferredoxin] + AMP + diphosphate. The catalysed reaction is [ThiS sulfur-carrier protein]-C-terminal Gly-Gly-AMP + S-sulfanyl-L-cysteinyl-[cysteine desulfurase] + AH2 = [ThiS sulfur-carrier protein]-C-terminal-Gly-aminoethanethioate + L-cysteinyl-[cysteine desulfurase] + A + AMP + 2 H(+). It participates in cofactor biosynthesis; thiamine diphosphate biosynthesis. Catalyzes the ATP-dependent transfer of a sulfur to tRNA to produce 4-thiouridine in position 8 of tRNAs, which functions as a near-UV photosensor. Also catalyzes the transfer of sulfur to the sulfur carrier protein ThiS, forming ThiS-thiocarboxylate. This is a step in the synthesis of thiazole, in the thiamine biosynthesis pathway. The sulfur is donated as persulfide by IscS. The sequence is that of Probable tRNA sulfurtransferase from Clostridium perfringens (strain SM101 / Type A).